The following is a 116-amino-acid chain: MRAIITFALFCVLYVTVQGKTSSPKVQVYSHFPGEYGKENTLICHVSGFHPPDITIELLKDGEILPNTQQTDLAFEKGWQFHLTKSVTFKPERGQNYACSVRHMNNKNIYSWEPNM.

The signal sequence occupies residues 1–19 (MRAIITFALFCVLYVTVQG). The Ig-like C1-type domain occupies 24–110 (PKVQVYSHFP…VRHMNNKNIY (87 aa)). Cysteines 44 and 99 form a disulfide.

The protein belongs to the beta-2-microglobulin family. In terms of assembly, heterodimer of an alpha chain and a beta chain. Beta-2-microglobulin is the beta-chain of major histocompatibility complex class I molecules.

It is found in the secreted. In terms of biological role, component of the class I major histocompatibility complex (MHC). Involved in the presentation of peptide antigens to the immune system. This is Beta-2-microglobulin (b2m) from Cyprinus carpio (Common carp).